Here is a 1572-residue protein sequence, read N- to C-terminus: Multiple epidermal growth factor-like domains protein 6 (1572 aa).

The N-terminal stretch at 1 to 26 (MPVGVEARASWRVVALTLLLLPAVPA) is a signal peptide. The region spanning 40–121 (MPHVCAEQKL…QKPGQEGCLS (82 aa)) is the EMI domain. Cystine bridges form between Cys44–Cys107, Cys73–Cys79, Cys106–Cys119, Cys126–Cys137, Cys133–Cys146, Cys148–Cys161, Cys167–Cys178, Cys174–Cys187, Cys189–Cys202, Cys291–Cys302, Cys298–Cys311, Cys313–Cys326, Cys418–Cys429, Cys425–Cys438, Cys440–Cys453, Cys522–Cys535, Cys529–Cys542, Cys544–Cys553, Cys566–Cys578, Cys572–Cys585, Cys587–Cys596, Cys609–Cys621, Cys615–Cys628, Cys630–Cys639, Cys788–Cys797, Cys791–Cys804, Cys806–Cys815, Cys832–Cys840, Cys834–Cys847, Cys849–Cys858, Cys871–Cys884, Cys875–Cys891, Cys893–Cys902, Cys915–Cys927, Cys921–Cys934, and Cys936–Cys945. The EGF-like 1; calcium-binding domain maps to 122–162 (DVDECANANGGCEGPCCNTVGGFYCRCPPGYQLQGDGKTCQ). The region spanning 163-203 (DVDECRSHNGGCQHRCVNTPGSYLCECKPGFRLHTDGRTCL) is the EGF-like 2; calcium-binding domain. In terms of domain architecture, EGF-like 3; calcium-binding spans 287 to 327 (DVDECALGLAQCAHGCLNTQGSFKCVCHAGYELGADGRQCY). An EGF-like 4; calcium-binding domain is found at 414-454 (DVDECASGHSGCEHHCSNLAGSFQCFCEAGYRLDEDRRGCT). EGF-like domains are found at residues 518 to 554 (FGHD…IICN), 562 to 597 (FGKN…AHCE), 605 to 640 (YGKH…RFCH), 785 to 816 (QEIC…SRCQ), 829 to 859 (QMRC…LSCQ), 867 to 903 (WGPD…PQCE), 911 to 946 (FGPG…SFCE), 997 to 1032 (FGLN…PTCL), 1040 to 1075 (YGKN…LACE), 1083 to 1118 (HGAG…DKCQ), 1131 to 1161 (EEHC…SHCE), 1169 to 1204 (FGEA…PGCE), 1256 to 1291 (YGPG…ADCS), 1299 to 1334 (FGPS…GHCE), 1342 to 1377 (FGKG…PHCE), 1390 to 1420 (LLEC…QACE), and 1428 to 1463 (HGSG…QFCE). Residue Asn1000 is glycosylated (N-linked (GlcNAc...) asparagine). 30 disulfides stabilise this stretch: Cys1001–Cys1013, Cys1007–Cys1020, Cys1022–Cys1031, Cys1044–Cys1056, Cys1050–Cys1063, Cys1065–Cys1074, Cys1087–Cys1099, Cys1093–Cys1106, Cys1108–Cys1117, Cys1134–Cys1142, Cys1136–Cys1149, Cys1151–Cys1160, Cys1173–Cys1185, Cys1177–Cys1192, Cys1194–Cys1203, Cys1260–Cys1272, Cys1266–Cys1279, Cys1281–Cys1290, Cys1303–Cys1315, Cys1309–Cys1322, Cys1324–Cys1333, Cys1346–Cys1358, Cys1352–Cys1365, Cys1367–Cys1376, Cys1393–Cys1401, Cys1395–Cys1408, Cys1410–Cys1419, Cys1432–Cys1444, Cys1438–Cys1451, and Cys1453–Cys1462.

The protein localises to the secreted. This chain is Multiple epidermal growth factor-like domains protein 6 (Megf6), found in Mus musculus (Mouse).